The chain runs to 300 residues: Ribosomal RNA small subunit methyltransferase H (300 aa).

Residues 46 to 48 (GGH), Asp-65, Phe-92, Asp-107, and Gln-114 each bind S-adenosyl-L-methionine.

This sequence belongs to the methyltransferase superfamily. RsmH family.

Its subcellular location is the cytoplasm. It catalyses the reaction cytidine(1402) in 16S rRNA + S-adenosyl-L-methionine = N(4)-methylcytidine(1402) in 16S rRNA + S-adenosyl-L-homocysteine + H(+). In terms of biological role, specifically methylates the N4 position of cytidine in position 1402 (C1402) of 16S rRNA. The polypeptide is Ribosomal RNA small subunit methyltransferase H (Prochlorococcus marinus (strain MIT 9301)).